A 215-amino-acid chain; its full sequence is MLQVYLVRHGETQWNAERRIQGQSDSPLTAKGEQQAMQVGERARSLGITHIISSDLGRTKRTAEIIAQACGCDITFDSRLRELDMGVLEKRQIDSLTEEEEGWRRQLVNGTQDGRILGGESMQELSDRVHAALASCLELPQGSRPLLVSHGIALGCLVSTILGLPAWAERRLRLRNCSISRIDYQESQWLASGWVVETAGDVSHLDAPALDELQR.

Substrate-binding positions include 8 to 15 (RHGETQWN), 21 to 22 (QG), arginine 58, lysine 60, 82 to 85 (ELDM), 104 to 105 (RR), and 151 to 152 (GI). The active-site Tele-phosphohistidine intermediate is the histidine 9. The active-site Proton donor/acceptor is the glutamate 82.

The protein belongs to the phosphoglycerate mutase family. GpmB subfamily.

The enzyme catalyses (2R)-2-phosphoglycerate = (2R)-3-phosphoglycerate. It functions in the pathway carbohydrate degradation; glycolysis; pyruvate from D-glyceraldehyde 3-phosphate: step 3/5. The polypeptide is Probable phosphoglycerate mutase GpmB (Salmonella paratyphi A (strain AKU_12601)).